A 394-amino-acid polypeptide reads, in one-letter code: NAC domain-containing protein 3 (394 aa).

Residues 3 to 147 (TPVGLRFCPT…TYTLCKVMFN (145 aa)) form the NAC domain. Residues 104–153 (IGEKKILMFYTSKESKSDWVIHEYHGFSHNQMMMTYTLCKVMFNGGMREK) mediate DNA binding. Disordered stretches follow at residues 152–173 (EKSS…RRDS) and 264–300 (NSLT…CDSF). Residues 155–165 (SSSPSSSGVSG) show a composition bias toward low complexity. The span at 286–300 (PKTNSIQTSSTCDSF) shows a compositional bias: polar residues.

The protein resides in the nucleus. The chain is NAC domain-containing protein 3 (NAC003) from Arabidopsis thaliana (Mouse-ear cress).